We begin with the raw amino-acid sequence, 517 residues long: MNVFFMFSLLFLAALGSCADDRRRPLEECFREADYEEFLEIAKNGLQRTSNPKRVVVVGAGMAGLSAAYVLAGAGHQVTLLEASERVGGRVNTYRNEKDGWYVNLGPMRLPERHRIIREYIRKFGLELNEFIQENDNAWYFIKNIRKRVSEVKKDPGVFKYPVKPSEEGKSASQLYRESLQKVIEELKRTNCSYILNKYDTYSTKEYLIKEGNLSPGAVDMIGDLLNEDSSYYLSFIESLKSDDIFSYEKRFDEIVGGFDQLPRSMYQAIAEKVHLNAQVIKIQQNAEDVRVTYQTPAKTLSYVIADYVIVCSTSRAARRIHFEPPLPPKKAHALRSIHYRSSTKIFLTCSQKFWEADGIHGGKSTTDLPSRFIYYPNHSFTSGIGVIVAYTLADDTDFFQALDIETSADIVINDLSLIHQLPKEQIQALCYPSKIQKWSLDEYAMGAITSFTPYQFQDFFEIVAAPVGRIYFAGEYTASVHGWLDSTIKSGLTAARDVNLASQKPSRIQLSNDNEL.

The first 18 residues, 1–18, serve as a signal peptide directing secretion; that stretch reads MNVFFMFSLLFLAALGSC. Cysteine 29 and cysteine 192 are oxidised to a cystine. FAD contacts are provided by residues 62–63, 82–83, arginine 90, and 106–109; these read MA, EA, and GPMR. Arginine 109 serves as a coordination point for substrate. Asparagine 191 carries an N-linked (GlcNAc...) asparagine glycan. Valine 280 contacts FAD. Cysteine 350 and cysteine 431 form a disulfide bridge. Substrate is bound at residue tyrosine 391. Residues glutamate 476 and 483–488 contribute to the FAD site; that span reads GWLDST. 483–484 is a binding site for substrate; the sequence is GW.

Belongs to the flavin monoamine oxidase family. FIG1 subfamily. In terms of assembly, homodimer; non-covalently linked. Requires FAD as cofactor. Post-translationally, N-glycosylated. In terms of tissue distribution, expressed by the venom gland.

The protein localises to the secreted. The enzyme catalyses an L-alpha-amino acid + O2 + H2O = a 2-oxocarboxylate + H2O2 + NH4(+). Catalyzes an oxidative deamination of predominantly hydrophobic and aromatic L-amino acids, thus producing hydrogen peroxide that may contribute to the diverse toxic effects of this enzyme. Exhibits diverse biological activities, such as hemorrhage, hemolysis, edema, apoptosis of vascular endothelial cells or tumor cell lines, antiparasitic activities, as well as regulation of platelet aggregation. Effects of snake L-amino oxidases on platelets are controversial, since they either induce aggregation or inhibit agonist-induced aggregation. These different effects are probably due to different experimental conditions. This protein has antibacterial activities. This chain is L-amino-acid oxidase, found in Pseudechis australis (Mulga snake).